Here is a 273-residue protein sequence, read N- to C-terminus: Formamidopyrimidine-DNA glycosylase (273 aa).

P2 (schiff-base intermediate with DNA) is an active-site residue. E3 serves as the catalytic Proton donor. K59 functions as the Proton donor; for beta-elimination activity in the catalytic mechanism. H92 and R111 together coordinate DNA. An FPG-type zinc finger spans residues 239 to 273; it reads KVYGKTGEPCVICGTPIEKIKLNGRGTHFCPHCQK. R263 functions as the Proton donor; for delta-elimination activity in the catalytic mechanism.

This sequence belongs to the FPG family. As to quaternary structure, monomer. Zn(2+) is required as a cofactor.

It catalyses the reaction Hydrolysis of DNA containing ring-opened 7-methylguanine residues, releasing 2,6-diamino-4-hydroxy-5-(N-methyl)formamidopyrimidine.. The catalysed reaction is 2'-deoxyribonucleotide-(2'-deoxyribose 5'-phosphate)-2'-deoxyribonucleotide-DNA = a 3'-end 2'-deoxyribonucleotide-(2,3-dehydro-2,3-deoxyribose 5'-phosphate)-DNA + a 5'-end 5'-phospho-2'-deoxyribonucleoside-DNA + H(+). Its function is as follows. Involved in base excision repair of DNA damaged by oxidation or by mutagenic agents. Acts as a DNA glycosylase that recognizes and removes damaged bases. Has a preference for oxidized purines, such as 7,8-dihydro-8-oxoguanine (8-oxoG). Has AP (apurinic/apyrimidinic) lyase activity and introduces nicks in the DNA strand. Cleaves the DNA backbone by beta-delta elimination to generate a single-strand break at the site of the removed base with both 3'- and 5'-phosphates. The protein is Formamidopyrimidine-DNA glycosylase of Listeria innocua serovar 6a (strain ATCC BAA-680 / CLIP 11262).